Reading from the N-terminus, the 394-residue chain is F-box protein At2g17830 (394 aa).

Residues 1–47 (MAIMSDLPRDLLAEILSRVPLASLRSVRFTCKKWNDLSKDRSFLKKQ) enclose the F-box domain.

The polypeptide is F-box protein At2g17830 (Arabidopsis thaliana (Mouse-ear cress)).